Here is a 1023-residue protein sequence, read N- to C-terminus: RTX-I toxin determinant A from serotypes 5/10 (1023 aa).

Helical transmembrane passes span 226 to 256 (NNLPDLSLAGPGFDAVSGILSVVSASFILSN), 297 to 326 (STTAATGGLIGSVVALAISPLSFLNVADKF), and 367 to 406 (INSVLSAASAGVGAAATGSLVGAPVAALVSAITGIISGIL). Hemolysin-type calcium-binding repeat units lie at residues 730–747 (FGSRFTDIFHGAKGDDEI), 748–765 (YGNDGHDILYGDDGNDVI), 766–783 (HGGDGNDHLVGGNGNDRL), 784–801 (IGGKGNNFLNGGDGDDEL), 812–829 (LGGAGNDILYGSDGTNLF), and 830–847 (DGGVGNDKIYGGLGKDIY).

The protein belongs to the RTX prokaryotic toxin (TC 1.C.11) family. In terms of processing, palmitoylated by ApxIC. The toxin only becomes active when modified.

The protein resides in the secreted. The protein localises to the host cell membrane. In terms of biological role, one of the virulence factors of A.pleuropneumoniae, which has a strong hemolytic activity and is cytotoxic for alveolar macrophages and neutrophils. The sequence is that of RTX-I toxin determinant A from serotypes 5/10 (apxIA) from Actinobacillus pleuropneumoniae (Haemophilus pleuropneumoniae).